The following is a 239-amino-acid chain: Uridylate kinase (239 aa).

ATP is bound at residue 10-13; it reads KFSG. Residues 18 to 23 are involved in allosteric activation by GTP; it reads GENGFG. A UMP-binding site is contributed by Gly52. ATP-binding residues include Gly53 and Arg57. Residues Asp73 and 134-141 contribute to the UMP site; that span reads TGNPYFTT. Positions 161, 167, and 170 each coordinate ATP.

This sequence belongs to the UMP kinase family. As to quaternary structure, homohexamer.

It localises to the cytoplasm. It catalyses the reaction UMP + ATP = UDP + ADP. The protein operates within pyrimidine metabolism; CTP biosynthesis via de novo pathway; UDP from UMP (UMPK route): step 1/1. Its activity is regulated as follows. Allosterically activated by GTP. Inhibited by UTP. Catalyzes the reversible phosphorylation of UMP to UDP. In Campylobacter jejuni subsp. jejuni serotype O:2 (strain ATCC 700819 / NCTC 11168), this protein is Uridylate kinase.